The sequence spans 264 residues: MSWLEAMILGLIQGLTEYLPVSSSGHLAIGSALFGIQGEENLAFTIVVHVATVCSTLVILWKEIDWIFKGLFKFQMNDETRYVINIVISMIPIGIVGVFFKDYVEAIFGSGLMIVGCMLLLTAALLSFSYYYKPRQKDKISMKDAFIIGLAQACAVLPGLSRSGSTIATGLLLGDNKAKLAQFSFLMVIPPILGEALLDSVKMMKGEDVVGDIPALSLIVGFLAAFVAGCLACKWMINIVKKGKLIYFAIYCAIAGLAVIITQL.

A run of 6 helical transmembrane segments spans residues 41–61, 82–102, 106–126, 140–160, 213–233, and 244–264; these read NLAF…VILW, YVIN…FFKD, AIFG…AALL, ISMK…LPGL, IPAL…CLAC, and KLIY…ITQL.

This sequence belongs to the UppP family.

Its subcellular location is the cell inner membrane. The catalysed reaction is di-trans,octa-cis-undecaprenyl diphosphate + H2O = di-trans,octa-cis-undecaprenyl phosphate + phosphate + H(+). Catalyzes the dephosphorylation of undecaprenyl diphosphate (UPP). Confers resistance to bacitracin. The chain is Undecaprenyl-diphosphatase from Bacteroides thetaiotaomicron (strain ATCC 29148 / DSM 2079 / JCM 5827 / CCUG 10774 / NCTC 10582 / VPI-5482 / E50).